We begin with the raw amino-acid sequence, 129 residues long: Integration host factor subunit alpha (129 aa).

The segment at 87–129 is disordered; that stretch reads SALNGEAPPEDHAEIDAREEAAADAAEARGEDFDEEGMEDMEG. Positions 95 to 117 are enriched in basic and acidic residues; the sequence is PEDHAEIDAREEAAADAAEARGE. A compositionally biased stretch (acidic residues) spans 118–129; it reads DFDEEGMEDMEG.

Belongs to the bacterial histone-like protein family. As to quaternary structure, heterodimer of an alpha and a beta chain.

Its function is as follows. This protein is one of the two subunits of integration host factor, a specific DNA-binding protein that functions in genetic recombination as well as in transcriptional and translational control. It is necessary for normal cell growth and the production of carotenoids in response to light. The protein is Integration host factor subunit alpha (ihfA) of Myxococcus xanthus.